A 140-amino-acid chain; its full sequence is Ribosome-binding factor A (140 aa).

The disordered stretch occupies residues 116–140 (RERQERGEIPPGSDDAQNCHDDEPS).

It belongs to the RbfA family. In terms of assembly, monomer. Binds 30S ribosomal subunits, but not 50S ribosomal subunits or 70S ribosomes.

Its subcellular location is the cytoplasm. Its function is as follows. One of several proteins that assist in the late maturation steps of the functional core of the 30S ribosomal subunit. Associates with free 30S ribosomal subunits (but not with 30S subunits that are part of 70S ribosomes or polysomes). Required for efficient processing of 16S rRNA. May interact with the 5'-terminal helix region of 16S rRNA. The protein is Ribosome-binding factor A of Synechococcus sp. (strain WH7803).